The chain runs to 91 residues: MTDTDIKSHKIEFPCVDYPIKVIGDTSAGFTAAVMEVLEKHAQVDAKTLAERQSSNGKYTTVQLHIIATSEDQLRDINSALRATGFVHMVL.

Belongs to the UPF0250 family.

The protein is UPF0250 protein PSPTO_4820 of Pseudomonas syringae pv. tomato (strain ATCC BAA-871 / DC3000).